The sequence spans 880 residues: Leucine--tRNA ligase (880 aa).

The 'HIGH' region motif lies at 49–59; the sequence is PYPSGRIHMGH. Residues 638–642 carry the 'KMSKS' region motif; that stretch reads KMSKS. ATP is bound at residue Lys641.

Belongs to the class-I aminoacyl-tRNA synthetase family.

The protein localises to the cytoplasm. The catalysed reaction is tRNA(Leu) + L-leucine + ATP = L-leucyl-tRNA(Leu) + AMP + diphosphate. The polypeptide is Leucine--tRNA ligase (Bartonella quintana (strain Toulouse) (Rochalimaea quintana)).